Here is a 466-residue protein sequence, read N- to C-terminus: UDP-N-acetylmuramate--L-alanine ligase (466 aa).

Residue Gly-114–Thr-120 coordinates ATP.

The protein belongs to the MurCDEF family.

Its subcellular location is the cytoplasm. The catalysed reaction is UDP-N-acetyl-alpha-D-muramate + L-alanine + ATP = UDP-N-acetyl-alpha-D-muramoyl-L-alanine + ADP + phosphate + H(+). Its pathway is cell wall biogenesis; peptidoglycan biosynthesis. Cell wall formation. This is UDP-N-acetylmuramate--L-alanine ligase from Chlorobium phaeobacteroides (strain DSM 266 / SMG 266 / 2430).